A 250-amino-acid chain; its full sequence is Trypsin (250 aa).

A signal peptide spans 1 to 15 (MRLLALLLMVGAAVA). A propeptide spans 16–22 (VPREDGR) (activation peptide). The 225-residue stretch at 23 to 247 (IIGGHECAAH…FLGWIERTLE (225 aa)) folds into the Peptidase S1 domain. 6 disulfides stabilise this stretch: Cys29–Cys163, Cys47–Cys63, Cys133–Cys236, Cys140–Cys209, Cys174–Cys188, and Cys199–Cys223. Catalysis depends on charge relay system residues His62 and Asp106. The active-site Charge relay system is the Ser203.

It belongs to the peptidase S1 family.

Its subcellular location is the secreted. It localises to the extracellular space. The enzyme catalyses Preferential cleavage: Arg-|-Xaa, Lys-|-Xaa.. This is Trypsin from Pleuronectes platessa (European plaice).